Here is a 497-residue protein sequence, read N- to C-terminus: Acetyl-coenzyme A carboxylase carboxyl transferase subunit beta, chloroplastic (497 aa).

Positions 225 to 497 constitute a CoA carboxyltransferase N-terminal domain; the sequence is LWVQCENCYG…LHGFLPLNQD (273 aa). Zn(2+)-binding residues include C229, C232, C248, and C251. A C4-type zinc finger spans residues 229–251; that stretch reads CENCYGLNYKKFFSSKMNICEYC.

Belongs to the AccD/PCCB family. In terms of assembly, acetyl-CoA carboxylase is a heterohexamer composed of biotin carboxyl carrier protein, biotin carboxylase and 2 subunits each of ACCase subunit alpha and ACCase plastid-coded subunit beta (accD). Zn(2+) serves as cofactor.

The protein resides in the plastid. The protein localises to the chloroplast stroma. It carries out the reaction N(6)-carboxybiotinyl-L-lysyl-[protein] + acetyl-CoA = N(6)-biotinyl-L-lysyl-[protein] + malonyl-CoA. The protein operates within lipid metabolism; malonyl-CoA biosynthesis; malonyl-CoA from acetyl-CoA: step 1/1. Its function is as follows. Component of the acetyl coenzyme A carboxylase (ACC) complex. Biotin carboxylase (BC) catalyzes the carboxylation of biotin on its carrier protein (BCCP) and then the CO(2) group is transferred by the transcarboxylase to acetyl-CoA to form malonyl-CoA. This chain is Acetyl-coenzyme A carboxylase carboxyl transferase subunit beta, chloroplastic, found in Phalaenopsis aphrodite subsp. formosana (Moth orchid).